The chain runs to 92 residues: Protein EMB-1 (92 aa).

Basic and acidic residues-rich tracts occupy residues 1–16 (MASQ…RARQ), 37–61 (AEGR…EMGR), and 72–92 (GGER…RTKK). The disordered stretch occupies residues 1–92 (MASQQEKKEL…IDESKFRTKK (92 aa)).

This sequence belongs to the small hydrophilic plant seed protein family. As to expression, expressed in embryogenic cells, somatic embryos and seeds at the later stages of development. In the embryos, expressed in the procambium, the root and shoot meristem and the protoderm of the cotyledons. Not detected in the endosperm or the aleurone layer, in young leaves or roots.

The protein localises to the nucleus. The polypeptide is Protein EMB-1 (Daucus carota (Wild carrot)).